The sequence spans 373 residues: MTAQNPNLAALSAAGVSVWLDDLSRDRLRSGNLQELIDTKSVVGVTTNPSIFQKALSEGHTYDAQIAELAARGADVDATIRTVTTDDVRSACDVLVPQWEDSDGVDGRVSIEVDPRLAHETEKTIQQAIELWKIVDRPNLFIKIPATKAGLPAISAVLAEGISVNVTLIFSVQRYREVMDAYLTGMEKARQAGHSLSKIHSVASFFVSRVDTEIDKRLDRIGSRQALELRGQAGVANARLAYAAYREVFEDSDRYRSLKVDGARVQRPLWASTGVKNPDYSDTLYVTELVAPHTVNTMPEKTIDAVADHGVIQGDTVTGTASDAQAVFDQLGAIGIDLTDVFAVLEEEGVRKFEASWNELLQETRAHLDTAAQ.

Lys-143 acts as the Schiff-base intermediate with substrate in catalysis.

The protein belongs to the transaldolase family. Type 2 subfamily.

It localises to the cytoplasm. The enzyme catalyses D-sedoheptulose 7-phosphate + D-glyceraldehyde 3-phosphate = D-erythrose 4-phosphate + beta-D-fructose 6-phosphate. The protein operates within carbohydrate degradation; pentose phosphate pathway; D-glyceraldehyde 3-phosphate and beta-D-fructose 6-phosphate from D-ribose 5-phosphate and D-xylulose 5-phosphate (non-oxidative stage): step 2/3. Functionally, transaldolase is important for the balance of metabolites in the pentose-phosphate pathway. This Mycobacterium bovis (strain ATCC BAA-935 / AF2122/97) protein is Transaldolase (tal).